Reading from the N-terminus, the 302-residue chain is MSDSRRVPITFQGLIQTLNQYWAEQGCVLIQPLDLEVGAGTFHPATFLRALGPEPWNAAYVQPSRRPTDGRYGENPNRLQRYYQYQVAMKPNPDNIQDLYLGSLQALGIDPLVHDLRFVEDNWESPTLGAWGLGWEVWLNGMEVTQFTYFQQAGGLECKPVLGEITYGLERLCMYLQRCDNVYALVWTYGPDGAAVTYGDVYHQNEVEQSTYNFEHANVAELFHRFDACEAEAKHLVEVGLPLPAYEQVSKASHAFNLLDARRAISVTERQRYILRVRALAQGVAQAYYAQREKLGFPGVKQ.

This sequence belongs to the class-II aminoacyl-tRNA synthetase family. In terms of assembly, tetramer of two alpha and two beta subunits.

The protein resides in the cytoplasm. It carries out the reaction tRNA(Gly) + glycine + ATP = glycyl-tRNA(Gly) + AMP + diphosphate. The polypeptide is Glycine--tRNA ligase alpha subunit (Xanthomonas oryzae pv. oryzae (strain MAFF 311018)).